The primary structure comprises 113 residues: Beta-defensin 112 (113 aa).

3 cysteine pairs are disulfide-bonded: C54–C82, C61–C75, and C65–C83.

This sequence belongs to the beta-defensin family.

It localises to the secreted. Has antibacterial activity. The polypeptide is Beta-defensin 112 (DEFB112) (Pan troglodytes (Chimpanzee)).